Reading from the N-terminus, the 596-residue chain is Heat shock factor protein 5 (596 aa).

The DNA-binding element occupies 10–200 (NPNNFPAKLW…FHRSFRRDSL (191 aa)). Positions 541–576 (EMGPASKPSEDTGLATPARYREHRSNSQQGKSPDLH) are disordered. At S572 the chain carries Phosphoserine.

This sequence belongs to the HSF family. In terms of assembly, homooligomer.

The protein localises to the nucleus. The protein resides in the chromosome. In terms of biological role, DNA-binding transcription factor that is essential for male fertility, spermatogenesis and meiotic prophase progression in spermatocytes under non-stress conditions. Positvely and negatively regulates gene expression to ensure progression of meiotic prophase beyond pachytene stage in spermatocytes. Plays a role in male germline meiotic sex chromosome remodeling and silencing through regulation of SMARCA4. This Homo sapiens (Human) protein is Heat shock factor protein 5 (HSF5).